Reading from the N-terminus, the 416-residue chain is Gasdermin-B (416 aa).

The interval 1–280 (MFSVFEEITR…EKRKDVLNSL (280 aa)) is triggers pyroptosis. 2 beta stranded membrane-spanning segments follow: residues 83-101 (EFQI…VRLP) and 102-125 (KEIT…ENRI). (Microbial infection) Glycyl lysine isopeptide (Lys-Gly) (interchain with G-Cter in ubiquitin) cross-links involve residues lysine 166, lysine 177, lysine 190, and lysine 192. The next 2 membrane-spanning stretches (beta stranded) occupy residues 167-183 (EETL…SQIS) and 184-198 (QGHL…REVT). Positions 229–250 (KSFPEEKDGASSCLGKSLGSED) are disordered. Positions 248–276 (SEDSRNMKEKLEDMESVLKDLTEEKRKDV) form a coiled coil. A (Microbial infection) Glycyl lysine isopeptide (Lys-Gly) (interchain with G-Cter in ubiquitin) cross-link involves residue methionine 308.

Belongs to the gasdermin family. Homooligomer; homooligomeric ring-shaped pore complex containing 24-26 subunits when inserted in the membrane. Cleavage by granzyme A (GZMA) relieves autoinhibition by releasing the N-terminal moiety (Gasdermin-B, N-terminal) that initiates pyroptosis. Not cleaved by other granzymes. Major cleavage site takes places after Lys-244; a minor cleavage site takes place after Lys-229. Cleavage by neutrophil elastase ELANE, inhibits its ability to trigger pyroptosis. Post-translationally, palmitoylated. In terms of processing, (Microbial infection) Ubiquitinated by S.flexneri IpaH7.8, leading to its degradation by the proteasome, thereby preventing its ability to form pores in bacterial-derived membranes. In the gastrointestinal tract, expressed in proliferating cells, including in the basal cell layer of esophagus and in isthmus/neck of stomach.

Its subcellular location is the cytoplasm. The protein resides in the cell membrane. With respect to regulation, the full-length protein before cleavage is inactive: intramolecular interactions between N- and C-terminal domains mediate autoinhibition in the absence of activation signal. The intrinsic pyroptosis-inducing activity is carried by the released N-terminal moiety (Gasdermin-B, N-terminal) following cleavage by granzyme A (GZMA). Its function is as follows. Precursor of a pore-forming protein that acts as a downstream mediator of granzyme-mediated cell death. This form constitutes the precursor of the pore-forming protein: upon cleavage, the released N-terminal moiety (Gasdermin-B, N-terminal) binds to membranes and forms pores, triggering pyroptosis. Also acts as a regulator of epithelial cell repair independently of programmed cell death: translocates to the plasma membrane and promotes epithelial maintenance and repair by regulating PTK2/FAK-mediated phosphorylation of PDGFA. Functionally, pore-forming protein produced by cleavage by granzyme A (GZMA), which causes membrane permeabilization and pyroptosis in target cells of cytotoxic T and natural killer (NK) cells. Key downstream mediator of granzyme-mediated cell death: (1) granzyme A (GZMA), delivered to target cells from cytotoxic T- and NK-cells, (2) specifically cleaves Gasdermin-B to generate this form. After cleavage, moves to the plasma membrane, homooligomerizes within the membrane and forms pores of 10-15 nanometers (nm) of inner diameter, triggering pyroptosis. The different isoforms recognize and bind different phospholipids on membranes, promoting cell death of different target cells. In terms of biological role, precursor of a pore-forming protein that acts as a downstream mediator of granzyme-mediated cell death and mediates pyroptosis. Following cleavage and activation by granzyme A (GZMA), the N-terminal part binds to membrane inner leaflet lipids, homooligomerizes within the human plasma membrane and forms pores of 10-15 nanometers (nm) of inner diameter, triggering pyroptosis. Recognizes and binds membrane inner leaflet lipids of human cells, such as phosphatidylinositol 4-phosphate, phosphatidylinositol 5-phosphate, bisphosphorylated phosphatidylinositols, such as phosphatidylinositol (4,5)-bisphosphate, and more weakly to phosphatidic acid. Also binds sufatide, a component of the apical membrane of epithelial cells. Precursor of a pore-forming protein that acts as a downstream mediator of granzyme-mediated cell death and mediates pyroptosis of human cells. Following cleavage and activation by granzyme A (GZMA), the N-terminal part binds to membrane inner leaflet lipids, homooligomerizes within the human plasma membrane and forms pores of 10-15 nanometers (nm) of inner diameter, triggering pyroptosis. Its function is as follows. Precursor of a pore-forming protein that acts as a downstream mediator of granzyme-mediated cell death and specifically mediates cell death of Gram-negative bacteria in response to infection. Following cleavage and activation by granzyme A (GZMA), the N-terminal part recognizes and binds phospholipids found on Gram-negative bacterial membranes, such as lipid A and cariolipin, homooligomerizes within the bacterial membranes and forms pores, triggering pyroptosis followed by cell death. In contrast to isoform 4, does not bind to membrane inner leaflet lipids of host human cell, such as phosphatidylinositol 4-phosphate, phosphatidylinositol 5-phosphate, bisphosphorylated phosphatidylinositols, such as phosphatidylinositol (4,5)-bisphosphate. Functionally, not able to trigger pyroptosis. The protein is Gasdermin-B of Homo sapiens (Human).